The chain runs to 229 residues: Endo-1,4-beta-xylanase 1 (229 aa).

The signal sequence occupies residues 1-19; that stretch reads MVAFSSLICALTSIASTLA. Positions 20–51 are excised as a propeptide; sequence MPTGLEPESSVNVTERGMYDFVLGAHNDHRRR. Residue Asn31 is glycosylated (N-linked (GlcNAc...) asparagine). The GH11 domain occupies 42 to 228; the sequence is LGAHNDHRRR…GSGSASQSVS (187 aa). Tyr117 lines the substrate pocket. The active-site Nucleophile is the Glu126. 5 residues coordinate substrate: Tyr128, Arg160, Pro164, Gln174, and Tyr209. Glu215 functions as the Proton donor in the catalytic mechanism.

Belongs to the glycosyl hydrolase 11 (cellulase G) family.

The protein localises to the secreted. The enzyme catalyses Endohydrolysis of (1-&gt;4)-beta-D-xylosidic linkages in xylans.. Its pathway is glycan degradation; xylan degradation. Glycoside hydrolase involved in the hydrolysis of xylan, a major plant cell wall hemicellulose made up of 1,4-beta-linked D-xylopyranose residues. Catalyzes the endohydrolysis of the main-chain 1,4-beta-glycosidic bonds connecting the xylose subunits yielding various xylooligosaccharides and xylose. This is Endo-1,4-beta-xylanase 1 from Hypocrea jecorina (strain QM6a) (Trichoderma reesei).